We begin with the raw amino-acid sequence, 205 residues long: Methylthioribulose-1-phosphate dehydratase (205 aa).

His-95 and His-97 together coordinate Zn(2+).

It belongs to the aldolase class II family. MtnB subfamily. It depends on Zn(2+) as a cofactor.

It carries out the reaction 5-(methylsulfanyl)-D-ribulose 1-phosphate = 5-methylsulfanyl-2,3-dioxopentyl phosphate + H2O. It participates in amino-acid biosynthesis; L-methionine biosynthesis via salvage pathway; L-methionine from S-methyl-5-thio-alpha-D-ribose 1-phosphate: step 2/6. Catalyzes the dehydration of methylthioribulose-1-phosphate (MTRu-1-P) into 2,3-diketo-5-methylthiopentyl-1-phosphate (DK-MTP-1-P). This chain is Methylthioribulose-1-phosphate dehydratase, found in Microcystis aeruginosa (strain NIES-843 / IAM M-2473).